We begin with the raw amino-acid sequence, 71 residues long: U3-scytotoxin-Sth1h (71 aa).

Positions 1–33 (MSQNSITSYKMGFAKHFFLFAVLLCATAMYSVA) are cleaved as a signal peptide. Positions 34 to 39 (EPAQER) are excised as a propeptide. 3 disulfides stabilise this stretch: Cys-46–Cys-60, Cys-53–Cys-64, and Cys-59–Cys-69.

As to expression, expressed by the venom gland.

The protein resides in the secreted. In terms of biological role, probable insect neurotoxin with ion channel impairing activity. Does not show activity on 45 human receptors from 9 families (5-hydroxytryptamine, adrenergic, dopamine, muscarinic, histamine, neurotransmitter, opioid, sigma, and gaba(A) receptors). In vivo, when mixed with U3-SYTX-Sth1a does not cause paralytic or lethal activity when injected into crickets. It is noteworthy that crickets are evolutionarily distant from prey species. This is U3-scytotoxin-Sth1h from Scytodes thoracica (Spitting spider).